The following is a 207-amino-acid chain: LexA repressor (207 aa).

A DNA-binding region (H-T-H motif) is located at residues 28–48 (VREIGEAVGLASSSTVHGHLS). Residues serine 130 and lysine 168 each act as for autocatalytic cleavage activity in the active site.

The protein belongs to the peptidase S24 family. As to quaternary structure, homodimer.

The enzyme catalyses Hydrolysis of Ala-|-Gly bond in repressor LexA.. Its function is as follows. Represses a number of genes involved in the response to DNA damage (SOS response), including recA and lexA. In the presence of single-stranded DNA, RecA interacts with LexA causing an autocatalytic cleavage which disrupts the DNA-binding part of LexA, leading to derepression of the SOS regulon and eventually DNA repair. In Staphylococcus carnosus (strain TM300), this protein is LexA repressor.